Reading from the N-terminus, the 291-residue chain is Small ribosomal subunit protein uS2 (291 aa).

Positions 231–291 (NRGSGTTEAP…AAEAPAEDAK (61 aa)) are disordered. Residues 246 to 259 (EWERELLEGSKAEE) are compositionally biased toward basic and acidic residues. The segment covering 260–285 (AAAAAPAENAEAPAAPAAEAPAAAEA) has biased composition (low complexity).

It belongs to the universal ribosomal protein uS2 family.

The protein is Small ribosomal subunit protein uS2 of Pseudarthrobacter chlorophenolicus (strain ATCC 700700 / DSM 12829 / CIP 107037 / JCM 12360 / KCTC 9906 / NCIMB 13794 / A6) (Arthrobacter chlorophenolicus).